The primary structure comprises 375 residues: FAD-dependent catabolic D-arginine dehydrogenase DauA (375 aa).

Residues alanine 14, glutamate 32–arginine 33, serine 41–histidine 48, alanine 171, and glycine 331–glutamine 336 contribute to the FAD site.

The protein belongs to the FAD-dependent glycerol-3-phosphate dehydrogenase family. In terms of assembly, monomer. FAD is required as a cofactor.

The enzyme catalyses D-arginine + A + H2O = 5-guanidino-2-oxopentanoate + AH2 + NH4(+). The catalysed reaction is a D-alpha-amino acid + A + H2O = a 2-oxocarboxylate + AH2 + NH4(+). Its activity is regulated as follows. Inhibited by D-arginine and D-lysine at high concentration. In terms of biological role, dauA is highly expressed within the cystic fibrosis (CF) lung, and it is required for virulence via the optimal production of hydrogen cyanide, pyocyanine, pyoverdine, rhamnolipid and alginate during biofilm formation. Involved in the catabolism of D-lysine and D-arginine. Under aerobic conditions, the arginine succinyltransferase (AST) and arginine transaminase (ATA) pathways are 2 major routes for L-arginine utilization as the sole source of carbon and nitrogen. The D-to-L racemization of arginine by DauA and DauB is necessary, before to be channeled into the AST and/or ATA pathways. DauA catalyzes the flavin-dependent oxidative deamination of D-arginine into 2-ketoarginine (2-KA) and ammonia. It also has dehydrogenase activity towards D-lysine, D-tyrosine, D-methionine, D-phenylalanine, D-ornithine, D-histidine and D-leucine as substrates. This chain is FAD-dependent catabolic D-arginine dehydrogenase DauA, found in Pseudomonas aeruginosa (strain ATCC 15692 / DSM 22644 / CIP 104116 / JCM 14847 / LMG 12228 / 1C / PRS 101 / PAO1).